A 194-amino-acid polypeptide reads, in one-letter code: Probable proteasome subunit beta type-4 (194 aa).

The protein belongs to the peptidase T1B family. As to quaternary structure, the 26S proteasome consists of a 20S proteasome core and two 19S regulatory subunits. The 20S proteasome core is composed of 28 subunits that are arranged in four stacked rings, resulting in a barrel-shaped structure. The two end rings are each formed by seven alpha subunits, and the two central rings are each formed by seven beta subunits. The catalytic chamber with the active sites is on the inside of the barrel.

The protein localises to the cytoplasm. It is found in the nucleus. Non-catalytic component of the proteasome, a multicatalytic proteinase complex which is characterized by its ability to cleave peptides with Arg, Phe, Tyr, Leu, and Glu adjacent to the leaving group at neutral or slightly basic pH. The proteasome has an ATP-dependent proteolytic activity. This chain is Probable proteasome subunit beta type-4, found in Schizosaccharomyces pombe (strain 972 / ATCC 24843) (Fission yeast).